A 298-amino-acid chain; its full sequence is Lipoyl synthase (298 aa).

Cysteine 40, cysteine 45, cysteine 51, cysteine 67, cysteine 71, cysteine 74, and serine 280 together coordinate [4Fe-4S] cluster. The 217-residue stretch at 53 to 269 (AVRRTATFMI…KEIAMAKGFS (217 aa)) folds into the Radical SAM core domain.

The protein belongs to the radical SAM superfamily. Lipoyl synthase family. Requires [4Fe-4S] cluster as cofactor.

The protein localises to the cytoplasm. The catalysed reaction is [[Fe-S] cluster scaffold protein carrying a second [4Fe-4S](2+) cluster] + N(6)-octanoyl-L-lysyl-[protein] + 2 oxidized [2Fe-2S]-[ferredoxin] + 2 S-adenosyl-L-methionine + 4 H(+) = [[Fe-S] cluster scaffold protein] + N(6)-[(R)-dihydrolipoyl]-L-lysyl-[protein] + 4 Fe(3+) + 2 hydrogen sulfide + 2 5'-deoxyadenosine + 2 L-methionine + 2 reduced [2Fe-2S]-[ferredoxin]. Its pathway is protein modification; protein lipoylation via endogenous pathway; protein N(6)-(lipoyl)lysine from octanoyl-[acyl-carrier-protein]. Its function is as follows. Catalyzes the radical-mediated insertion of two sulfur atoms into the C-6 and C-8 positions of the octanoyl moiety bound to the lipoyl domains of lipoate-dependent enzymes, thereby converting the octanoylated domains into lipoylated derivatives. This chain is Lipoyl synthase, found in Bacillus pumilus (strain SAFR-032).